Consider the following 173-residue polypeptide: DNA-directed RNA polymerase subunit delta (173 aa).

The 68-residue stretch at 14–81 (MALVEIAHEL…SDQTWGLRSW (68 aa)) folds into the HTH HARE-type domain. Positions 110–173 (LDLDEFEEID…DYDDEEEEIK (64 aa)) are disordered.

It belongs to the RpoE family. As to quaternary structure, RNAP is composed of a core of 2 alpha, a beta and a beta' subunit. The core is associated with a delta subunit, and at least one of epsilon or omega. When a sigma factor is associated with the core the holoenzyme is formed, which can initiate transcription.

Functionally, participates in both the initiation and recycling phases of transcription. In the presence of the delta subunit, RNAP displays an increased specificity of transcription, a decreased affinity for nucleic acids, and an increased efficiency of RNA synthesis because of enhanced recycling. May function in sigma factor switching. It displaces RNA bound to RNA polymerase in a binary complex. This Bacillus subtilis (strain 168) protein is DNA-directed RNA polymerase subunit delta.